The chain runs to 38 residues: Photosystem II reaction center protein L (38 aa).

A helical transmembrane segment spans residues S17–F37.

Belongs to the PsbL family. PSII is composed of 1 copy each of membrane proteins PsbA, PsbB, PsbC, PsbD, PsbE, PsbF, PsbH, PsbI, PsbJ, PsbK, PsbL, PsbM, PsbT, PsbX, PsbY, PsbZ, Psb30/Ycf12, at least 3 peripheral proteins of the oxygen-evolving complex and a large number of cofactors. It forms dimeric complexes.

The protein localises to the plastid. The protein resides in the chloroplast thylakoid membrane. One of the components of the core complex of photosystem II (PSII). PSII is a light-driven water:plastoquinone oxidoreductase that uses light energy to abstract electrons from H(2)O, generating O(2) and a proton gradient subsequently used for ATP formation. It consists of a core antenna complex that captures photons, and an electron transfer chain that converts photonic excitation into a charge separation. This subunit is found at the monomer-monomer interface and is required for correct PSII assembly and/or dimerization. The protein is Photosystem II reaction center protein L of Rhodomonas salina (Cryptomonas salina).